An 818-amino-acid chain; its full sequence is MAKVASSGAEEALATIDGAPRRNVKKSEAFVMSGDVLISLNRNVSSTYAKLLGDQLPPGTTVASSIHPHQLSRATASAGVSFPSMNRNGAAAQKLSRLPVPVSTSQIERRGSLARKTSEESSPTAIRMLKTAPIERMESTDVEESEEETVMMTTDEKENQKKPNENDDEVMVVDEEQFIVVSNDMKSPNEEIVAKSLRSAMFTMPTDNHHHSYNSSPQISTLSPHLRSNGDGPSRSPVYDDVDDDLNGSLDAKDMSNNSHQQSFRSPENYSEKDTPSKHSVVTIDGSGVSNHYDQDGMFSHVYYSTQDTTPKHGSPSLRKQIFESRTTPNTAASNSSASASPSLHATSESRGATGGVSLRSAESSNLNQTAVPSTSTNSVGGEREAAQIARNLYELKNCTSTQVADRLNEQNEFSFLILVKYLELFQFSTTRIDAALREFLSRVELRGESSARERLLRVFSARYLECNPAIFDSLDEVHTLTCALLLLNSDLHGPNMGKKMTARDFITNIAHTGCTFKREMLKTLFQSIKDNAISLQNSAKNSTANGSVASTSRRQPQQIYEVDPDSVVEYYSGFLMRKYVRETDGGKTPFGRRSWRMVYARLRGLVLYFDTDEHPKATSRYASLENAVSLHHALAEPAPDYKKKSFVFRVRIAHGGEILFQTSNQKELQEWCEKINFVAAAFSSPTLPLPVTSKPETAPMPRLPRIPCLAPITKQLSTHEARVAELNEMIEIVSQSVSPNQPQQLITDRWVLLSFEKRRYSTYINVLRRSLEARKASSATTMNIMMTPTRRQQQNQKPVVSEDRLSYTDAVNGAAAH.

Disordered regions lie at residues 92 to 123 (AQKL…ESSP), 137 to 168 (MEST…ENDD), 208 to 291 (NHHH…GVSN), and 326 to 383 (RTTP…VGGE). Positions 107-119 (IERRGSLARKTSE) are enriched in basic and acidic residues. A compositionally biased stretch (acidic residues) spans 140–149 (TDVEESEEET). Basic and acidic residues predominate over residues 154–165 (TDEKENQKKPNE). 2 stretches are compositionally biased toward polar residues: residues 213 to 223 (YNSSPQISTLS) and 255 to 269 (MSNN…SPEN). Low complexity predominate over residues 326–347 (RTTPNTAASNSSASASPSLHAT). The SEC7 domain occupies 356–532 (GVSLRSAESS…KTLFQSIKDN (177 aa)). The segment covering 361-380 (SAESSNLNQTAVPSTSTNSV) has biased composition (polar residues). Residues 569 to 681 (VEYYSGFLMR…WCEKINFVAA (113 aa)) form the PH domain. Positions 782-799 (TMNIMMTPTRRQQQNQKP) are enriched in polar residues. Positions 782–818 (TMNIMMTPTRRQQQNQKPVVSEDRLSYTDAVNGAAAH) are disordered.

In terms of assembly, interacts (via short N-terminal region) with microtubule-associated proteins tac-1 and zyg-8.

It localises to the cytoplasm. It is found in the cell cortex. Its subcellular location is the cell membrane. Functionally, guanine nucleotide exchange factor for arf-6. Involved in response to injury in mechanosensory neurons. Inhibits axon regrowth via microtubule dynamics, possibly by inducing axonal microtubule catastrophes. Limits microtubule growth near the cellular cortex of early embryonic cells. This is Exchange factor for Arf-6 from Caenorhabditis elegans.